Here is a 289-residue protein sequence, read N- to C-terminus: ATP synthase gamma chain (289 aa).

The protein belongs to the ATPase gamma chain family. As to quaternary structure, F-type ATPases have 2 components, CF(1) - the catalytic core - and CF(0) - the membrane proton channel. CF(1) has five subunits: alpha(3), beta(3), gamma(1), delta(1), epsilon(1). CF(0) has three main subunits: a, b and c.

Its subcellular location is the cell inner membrane. Its function is as follows. Produces ATP from ADP in the presence of a proton gradient across the membrane. The gamma chain is believed to be important in regulating ATPase activity and the flow of protons through the CF(0) complex. The protein is ATP synthase gamma chain of Histophilus somni (strain 2336) (Haemophilus somnus).